Reading from the N-terminus, the 260-residue chain is Deoxycytidine kinase (260 aa).

Residues Ser11 and Ser15 each carry the phosphoserine; by CK1 modification. 28–36 (GNIAAGKST) lines the ATP pocket. Glu53 contacts substrate. A Phosphothreonine; by CK1 modification is found at Thr72. Ser74 carries the post-translational modification Phosphoserine. Residues Tyr86 and Gln97 each contribute to the substrate site. Catalysis depends on Glu127, which acts as the Proton acceptor. Substrate-binding residues include Arg128 and Asp133. Residue 188–192 (RIYLR) participates in ATP binding. Glu197 is a binding site for substrate. 240–242 (EDF) lines the ATP pocket.

It belongs to the DCK/DGK family. As to quaternary structure, homodimer. Post-translationally, phosphorylated and activated in vitro upon phosphorylation at Ser-74 by CSNK1D/CK1.

The protein resides in the nucleus. The catalysed reaction is 2'-deoxycytidine + a ribonucleoside 5'-triphosphate = dCMP + a ribonucleoside 5'-diphosphate + H(+). It catalyses the reaction 2'-deoxyadenosine + ATP = dAMP + ADP + H(+). The enzyme catalyses 2'-deoxyguanosine + ATP = dGMP + ADP + H(+). Phosphorylates the deoxyribonucleosides deoxycytidine, deoxyguanosine and deoxyadenosine. Has broad substrate specificity, and does not display selectivity based on the chirality of the substrate. It is also an essential enzyme for the phosphorylation of numerous nucleoside analogs widely employed as antiviral and chemotherapeutic agents. The chain is Deoxycytidine kinase (DCK) from Homo sapiens (Human).